The chain runs to 352 residues: Ketol-acid reductoisomerase (NAD(+)) (352 aa).

In terms of domain architecture, KARI N-terminal Rossmann spans 11 to 199 (ENVVTSEEFT…AIGSGYLFPT (189 aa)). Residues 38–41 (YGVQ) and 100–103 (DAGQ) contribute to the NAD(+) site. Histidine 124 is an active-site residue. Residue glycine 153 participates in NAD(+) binding. The KARI C-terminal knotted domain maps to 200–347 (TFEKEVFSDL…AAVRALRPEN (148 aa)). Mg(2+)-binding residues include aspartate 208, glutamate 212, glutamate 244, and glutamate 248. Serine 270 contributes to the substrate binding site.

Belongs to the ketol-acid reductoisomerase family. Mg(2+) is required as a cofactor.

The enzyme catalyses (2R)-2,3-dihydroxy-3-methylbutanoate + NAD(+) = (2S)-2-acetolactate + NADH + H(+). The protein operates within amino-acid biosynthesis; L-isoleucine biosynthesis; L-isoleucine from 2-oxobutanoate: step 2/4. Its pathway is amino-acid biosynthesis; L-valine biosynthesis; L-valine from pyruvate: step 2/4. Its function is as follows. Involved in the biosynthesis of branched-chain amino acids (BCAA). Catalyzes an alkyl-migration followed by a ketol-acid reduction of (S)-2-acetolactate (S2AL) to yield (R)-2,3-dihydroxy-isovalerate. In the isomerase reaction, S2AL is rearranged via a Mg-dependent methyl migration to produce 3-hydroxy-3-methyl-2-ketobutyrate (HMKB). In the reductase reaction, this 2-ketoacid undergoes a metal-dependent reduction by NADH to yield (R)-2,3-dihydroxy-isovalerate. The chain is Ketol-acid reductoisomerase (NAD(+)) from Desulfosudis oleivorans (strain DSM 6200 / JCM 39069 / Hxd3) (Desulfococcus oleovorans).